The following is a 93-amino-acid chain: Putative defensin-like protein 283 (93 aa).

A signal peptide spans 1–24 (MTKIGFYLATYATIYIILSPGLLA). 3 disulfides stabilise this stretch: Cys-43–Cys-83, Cys-66–Cys-90, and Cys-72–Cys-92.

This sequence belongs to the DEFL family.

It localises to the secreted. This chain is Putative defensin-like protein 283, found in Arabidopsis thaliana (Mouse-ear cress).